The chain runs to 95 residues: Co-chaperonin GroES (95 aa).

It belongs to the GroES chaperonin family. Heptamer of 7 subunits arranged in a ring. Interacts with the chaperonin GroEL.

It is found in the cytoplasm. Its function is as follows. Together with the chaperonin GroEL, plays an essential role in assisting protein folding. The GroEL-GroES system forms a nano-cage that allows encapsulation of the non-native substrate proteins and provides a physical environment optimized to promote and accelerate protein folding. GroES binds to the apical surface of the GroEL ring, thereby capping the opening of the GroEL channel. This Aliivibrio salmonicida (strain LFI1238) (Vibrio salmonicida (strain LFI1238)) protein is Co-chaperonin GroES.